Reading from the N-terminus, the 315-residue chain is Olfactory receptor 5AN6 (315 aa).

Topologically, residues 1–29 (MPGGRNSTVITKFILVGFSDFPKLKLVLF) are extracellular. A helical transmembrane segment spans residues 30 to 50 (VIFLGSYLSTVVWNLGLIILI). The Cytoplasmic segment spans residues 51–54 (RIDP). A helical membrane pass occupies residues 55–75 (YLHTPMYFFLSNLSFLDFCYI). The Extracellular segment spans residues 76 to 99 (SSTTPKMLSGFFQKSKSISFVGCT). The cysteines at positions 98 and 180 are disulfide-linked. The chain crosses the membrane as a helical span at residues 100-120 (MQYFIFSSLGLSECCLLAAMA). The Cytoplasmic portion of the chain corresponds to 121 to 123 (YDR). A helical membrane pass occupies residues 124–143 (YAAICNPLLYTAIMSPSLCV). A topological domain (extracellular) is located at residue His-144. The helical transmembrane segment at 145–165 (MVVGAYSTGLLGSLIQLCAIL) threads the bilayer. The Cytoplasmic segment spans residues 166–202 (QLHFCGPNIINHFFCDLPQLLVLSCSETFPLQVLKFV). Residues 203–223 (IAVIFGVASVIVILISYGYII) traverse the membrane as a helical segment. Over 224-240 (GTILNISSVEGRSKAFN) the chain is Extracellular. The helical transmembrane segment at 241–261 (TCASHLTAVTLFFGSGLFVYM) threads the bilayer. Residues 262–272 (RPSSNSSQGYD) lie on the Cytoplasmic side of the membrane. Residues 273 to 293 (KMASVFYTVVIPMLNPLIYSL) form a helical membrane-spanning segment. Over 294-315 (RNKEIKDALQRCKNKCFSQCHC) the chain is Extracellular.

Belongs to the G-protein coupled receptor 1 family. In terms of tissue distribution, localized in the dorsomedial and ventral region of the olfactory bulb.

It localises to the cell membrane. Odorant receptor specific for muscone. Muscone-binding causes a conformation change that triggers signaling via G(s)-class of G alpha protein GNAL, activating adenylyl cyclase. In Mus musculus (Mouse), this protein is Olfactory receptor 5AN6.